Here is a 197-residue protein sequence, read N- to C-terminus: Probable GTP-binding protein EngB (197 aa).

Positions 22–197 constitute an EngB-type G domain; it reads TGVEVAFAGR…LKEKLDIWYQ (176 aa). Residues 30-37, 57-61, 75-78, 142-145, and 177-179 each bind GTP; these read GRSNAGKS, GRTQL, DLPG, TKAD, and FSS. Mg(2+) is bound by residues serine 37 and threonine 59.

This sequence belongs to the TRAFAC class TrmE-Era-EngA-EngB-Septin-like GTPase superfamily. EngB GTPase family. The cofactor is Mg(2+).

In terms of biological role, necessary for normal cell division and for the maintenance of normal septation. This is Probable GTP-binding protein EngB from Francisella philomiragia subsp. philomiragia (strain ATCC 25017 / CCUG 19701 / FSC 153 / O#319-036).